The sequence spans 125 residues: Salivary protein 15 Ipac-1 (125 aa).

The signal sequence occupies residues 1–15 (MKVVCIILLFGIAAA). N-linked (GlcNAc...) asparagine glycosylation is found at asparagine 82 and asparagine 94. Positions 106 to 125 (GPSGQTCADKSKCVGHIPGC) are CD4-binding.

The protein belongs to the salp15 family. In terms of assembly, interacts with host CD4. Interacts with host DC-SIGN (CD209). Interacts with Borrelia outer surface protein C (OspC). In terms of tissue distribution, expressed in salivary glands.

It is found in the secreted. Its function is as follows. Salivary tick protein that downregulates host immune system by binding to both dendritic cells, and CD4(+) T cells. Specifically binds to the CD4 coreceptor on T cells. This interaction prevents the activation of the Src kinase, Lck, and its downstream substrate Zap-70, and results in deficient activation of PLCgamma1, the repression of calcium fluxes triggered by T-cell antigen receptor (TCR) ligation, and a subsequent reduction in interleukin-2 production. This salivary protein also binds to DC-SIGN (CD209) on dendritic cells (DC) and activates the Raf-1 kinase/MEK signaling pathway that results in down-regulating expression of pro-inflammatory cytokines. Furthermore, it inhibits T cell proliferation induced by DCs. It also inhibits in vitro keratinocyte inflammation induced by Borrelia burgdorferi or by the major outer surface protein (OspC) of Borrelia. In addition, it downregulates chemokines and monocyte chemoattractant protein 1, as well as several antimicrobial peptides such as defensins, cathelicidin, psoriasin, and RNase 7. Apart from its immunomodulatory activities, it is also associated with protection of Borrelia spirochetes from antibody-mediated killing through its binding to OspC. In vivo, tests on different immune disease animal models show promising therapeutic results, e.g., in inhibiting HIV infection, experimental autoimmune encephalomyelitis, transplantation rejection, and asthma. The chain is Salivary protein 15 Ipac-1 from Ixodes pacificus (Western black-legged tick).